The primary structure comprises 222 residues: uncharacterized protein (222 aa).

This is an uncharacterized protein from Homo sapiens (Human).